A 335-amino-acid chain; its full sequence is Anthranilate phosphoribosyltransferase (335 aa).

Residues glycine 79, 82-83 (GD), threonine 87, 89-92 (NIST), 107-115 (KHGSRSVSS), and serine 119 each bind 5-phospho-alpha-D-ribose 1-diphosphate. Residue glycine 79 coordinates anthranilate. Serine 91 is a Mg(2+) binding site. Arginine 165 contributes to the anthranilate binding site. Residues aspartate 223 and glutamate 224 each coordinate Mg(2+).

Belongs to the anthranilate phosphoribosyltransferase family. As to quaternary structure, homodimer. Mg(2+) serves as cofactor.

The enzyme catalyses N-(5-phospho-beta-D-ribosyl)anthranilate + diphosphate = 5-phospho-alpha-D-ribose 1-diphosphate + anthranilate. It participates in amino-acid biosynthesis; L-tryptophan biosynthesis; L-tryptophan from chorismate: step 2/5. Catalyzes the transfer of the phosphoribosyl group of 5-phosphorylribose-1-pyrophosphate (PRPP) to anthranilate to yield N-(5'-phosphoribosyl)-anthranilate (PRA). The chain is Anthranilate phosphoribosyltransferase from Helicobacter pylori (strain G27).